The following is a 172-amino-acid chain: Stellate protein CG33238 (172 aa).

Belongs to the casein kinase 2 subunit beta family. In terms of assembly, interacts in vitro with the casein kinase 2 alpha subunit (CkII-alpha). The relevance of such interaction is however unclear in vivo. As to expression, probably not expressed in wild-type flies. In males lacking the Y chromosome, it is testis-specific and constitutes the main component of star-shaped crystals.

Unknown. In males lacking the Y chromosome, its strong overexpression leads to the appearance of proteinaceous star-shaped crystals in the primary spermatocytes causing meiotic drive, possibly by interfering with normal casein kinase 2 activity. This chain is Stellate protein CG33238 (Ste:CG33238), found in Drosophila melanogaster (Fruit fly).